A 162-amino-acid chain; its full sequence is MTAIQQFFKTFFLTELLKGLALTGRYTFKRKFTVQFPEEKTPISPRFRGLHALRRYENGEERCIACKLCEAVCPALAITIESETRADNTRRTTRYDIDLTKCIFCGFCEESCPVDSIVETQILEYHGEKRGDLYFTKDMLLAVGDRYEKEIAAAKAADARYR.

4Fe-4S ferredoxin-type domains are found at residues 54–83 (RRYE…IESE) and 93–122 (TRYD…ETQI). The [4Fe-4S] cluster site is built by Cys-63, Cys-66, Cys-69, Cys-73, Cys-102, Cys-105, Cys-108, and Cys-112.

Belongs to the complex I 23 kDa subunit family. NDH-1 is composed of 14 different subunits. Subunits NuoA, H, J, K, L, M, N constitute the membrane sector of the complex. [4Fe-4S] cluster is required as a cofactor.

Its subcellular location is the cell inner membrane. It carries out the reaction a quinone + NADH + 5 H(+)(in) = a quinol + NAD(+) + 4 H(+)(out). In terms of biological role, NDH-1 shuttles electrons from NADH, via FMN and iron-sulfur (Fe-S) centers, to quinones in the respiratory chain. The immediate electron acceptor for the enzyme in this species is believed to be ubiquinone. Couples the redox reaction to proton translocation (for every two electrons transferred, four hydrogen ions are translocated across the cytoplasmic membrane), and thus conserves the redox energy in a proton gradient. In Burkholderia mallei (strain NCTC 10247), this protein is NADH-quinone oxidoreductase subunit I.